The sequence spans 249 residues: 5'-nucleotidase SurE (249 aa).

Residues Asp-8, Asp-9, Ser-39, and Asn-91 each coordinate a divalent metal cation.

The protein belongs to the SurE nucleotidase family. Requires a divalent metal cation as cofactor.

It localises to the cytoplasm. It carries out the reaction a ribonucleoside 5'-phosphate + H2O = a ribonucleoside + phosphate. Functionally, nucleotidase that shows phosphatase activity on nucleoside 5'-monophosphates. The sequence is that of 5'-nucleotidase SurE from Pseudomonas entomophila (strain L48).